The primary structure comprises 149 residues: Large ribosomal subunit protein bL9 (149 aa).

Belongs to the bacterial ribosomal protein bL9 family.

Binds to the 23S rRNA. The sequence is that of Large ribosomal subunit protein bL9 from Legionella pneumophila (strain Paris).